The primary structure comprises 123 residues: Ribosome-binding factor A (123 aa).

Belongs to the RbfA family. In terms of assembly, monomer. Binds 30S ribosomal subunits, but not 50S ribosomal subunits or 70S ribosomes.

It localises to the cytoplasm. Its function is as follows. One of several proteins that assist in the late maturation steps of the functional core of the 30S ribosomal subunit. Associates with free 30S ribosomal subunits (but not with 30S subunits that are part of 70S ribosomes or polysomes). Required for efficient processing of 16S rRNA. May interact with the 5'-terminal helix region of 16S rRNA. The protein is Ribosome-binding factor A of Prochlorococcus marinus (strain NATL1A).